The chain runs to 104 residues: Large ribosomal subunit protein cL38 (104 aa).

The transit peptide at 1-39 (MASVSSIFGCGVSMAPNSSLRNKAIRTERRSACGGLLIE) directs the protein to the chloroplast. The interval 42-76 (SRPQKKSTAHHMKTRPRKSRLSDRNRKPTVYAPLP) is disordered. The segment covering 44 to 60 (PQKKSTAHHMKTRPRKS) has biased composition (basic residues).

It belongs to the chloroplast-specific ribosomal protein cL38 family. As to quaternary structure, part of the 50S ribosomal subunit.

It localises to the plastid. The protein resides in the chloroplast. This is Large ribosomal subunit protein cL38 (PSRP6) from Pisum sativum (Garden pea).